A 428-amino-acid chain; its full sequence is Serine--tRNA ligase (428 aa).

231-233 provides a ligand contact to L-serine; sequence TAE. Residue 262-264 coordinates ATP; sequence RSE. Residue E285 coordinates L-serine. Residue 349–352 coordinates ATP; sequence EISS. S385 is an L-serine binding site.

This sequence belongs to the class-II aminoacyl-tRNA synthetase family. Type-1 seryl-tRNA synthetase subfamily. As to quaternary structure, homodimer. The tRNA molecule binds across the dimer.

It is found in the cytoplasm. The enzyme catalyses tRNA(Ser) + L-serine + ATP = L-seryl-tRNA(Ser) + AMP + diphosphate + H(+). The catalysed reaction is tRNA(Sec) + L-serine + ATP = L-seryl-tRNA(Sec) + AMP + diphosphate + H(+). It participates in aminoacyl-tRNA biosynthesis; selenocysteinyl-tRNA(Sec) biosynthesis; L-seryl-tRNA(Sec) from L-serine and tRNA(Sec): step 1/1. In terms of biological role, catalyzes the attachment of serine to tRNA(Ser). Is also able to aminoacylate tRNA(Sec) with serine, to form the misacylated tRNA L-seryl-tRNA(Sec), which will be further converted into selenocysteinyl-tRNA(Sec). The sequence is that of Serine--tRNA ligase from Staphylococcus haemolyticus (strain JCSC1435).